The primary structure comprises 403 residues: Phosphoglycerate kinase (403 aa).

Residues 22 to 24 (DLN), arginine 37, 60 to 63 (HLGR), arginine 119, and arginine 156 contribute to the substrate site. ATP-binding positions include lysine 206, glycine 302, glutamate 333, and 359-362 (GGDS).

Belongs to the phosphoglycerate kinase family. In terms of assembly, monomer.

It is found in the cytoplasm. It catalyses the reaction (2R)-3-phosphoglycerate + ATP = (2R)-3-phospho-glyceroyl phosphate + ADP. The protein operates within carbohydrate degradation; glycolysis; pyruvate from D-glyceraldehyde 3-phosphate: step 2/5. The sequence is that of Phosphoglycerate kinase from Streptomyces griseus subsp. griseus (strain JCM 4626 / CBS 651.72 / NBRC 13350 / KCC S-0626 / ISP 5235).